Here is a 122-residue protein sequence, read N- to C-terminus: Large ribosomal subunit protein bL12 (122 aa).

It belongs to the bacterial ribosomal protein bL12 family. In terms of assembly, homodimer. Part of the ribosomal stalk of the 50S ribosomal subunit. Forms a multimeric L10(L12)X complex, where L10 forms an elongated spine to which 2 to 4 L12 dimers bind in a sequential fashion. Binds GTP-bound translation factors.

In terms of biological role, forms part of the ribosomal stalk which helps the ribosome interact with GTP-bound translation factors. Is thus essential for accurate translation. This is Large ribosomal subunit protein bL12 from Xylella fastidiosa (strain M12).